The primary structure comprises 173 residues: Superoxide dismutase [Cu-Zn] (173 aa).

Residues 1-19 form the signal peptide; that stretch reads MKRFSLAILALVVATGAQA. Residues His67, His69, and His92 each coordinate Cu cation. The tract at residues 72-113 is disordered; sequence GSCQPATKDGKASAAESAGGHLDPQNTGKHEGPEGAGHLGDL. Cys74 and Cys169 are disulfide-bonded. Zn(2+) contacts are provided by His92, His101, His109, and Asp112. Cu cation is bound at residue His147.

The protein belongs to the Cu-Zn superoxide dismutase family. As to quaternary structure, monomer. Cu cation serves as cofactor. Requires Zn(2+) as cofactor.

The protein localises to the periplasm. It carries out the reaction 2 superoxide + 2 H(+) = H2O2 + O2. In terms of biological role, destroys radicals which are normally produced within the cells and which are toxic to biological systems. In Escherichia coli O157:H7, this protein is Superoxide dismutase [Cu-Zn] (sodC).